The chain runs to 309 residues: Glutaminase (309 aa).

Substrate contacts are provided by Ser64, Asn114, Glu160, Asn167, Tyr191, Tyr243, and Val261.

This sequence belongs to the glutaminase family. Homotetramer.

The enzyme catalyses L-glutamine + H2O = L-glutamate + NH4(+). This is Glutaminase from Agrobacterium fabrum (strain C58 / ATCC 33970) (Agrobacterium tumefaciens (strain C58)).